We begin with the raw amino-acid sequence, 228 residues long: 2,3-bisphosphoglycerate-dependent phosphoglycerate mutase (228 aa).

Residues 8-15 (RHGQSQWN), 21-22 (TG), R60, 87-90 (ERHY), K98, 114-115 (RR), and 180-181 (GN) contribute to the substrate site. H9 acts as the Tele-phosphohistidine intermediate in catalysis. E87 functions as the Proton donor/acceptor in the catalytic mechanism.

It belongs to the phosphoglycerate mutase family. BPG-dependent PGAM subfamily. As to quaternary structure, homodimer.

The enzyme catalyses (2R)-2-phosphoglycerate = (2R)-3-phosphoglycerate. Its pathway is carbohydrate degradation; glycolysis; pyruvate from D-glyceraldehyde 3-phosphate: step 3/5. Catalyzes the interconversion of 2-phosphoglycerate and 3-phosphoglycerate. The protein is 2,3-bisphosphoglycerate-dependent phosphoglycerate mutase of Erythrobacter litoralis (strain HTCC2594).